The sequence spans 233 residues: Orotidine 5'-phosphate decarboxylase (233 aa).

Substrate-binding positions include aspartate 9, lysine 31, 58–67, threonine 120, arginine 182, glutamine 191, glycine 211, and arginine 212; that span reads DLKLHDIPNT. Catalysis depends on lysine 60, which acts as the Proton donor.

The protein belongs to the OMP decarboxylase family. Type 1 subfamily. As to quaternary structure, homodimer.

It catalyses the reaction orotidine 5'-phosphate + H(+) = UMP + CO2. Its pathway is pyrimidine metabolism; UMP biosynthesis via de novo pathway; UMP from orotate: step 2/2. Its function is as follows. Catalyzes the decarboxylation of orotidine 5'-monophosphate (OMP) to uridine 5'-monophosphate (UMP). In Listeria monocytogenes serotype 4a (strain HCC23), this protein is Orotidine 5'-phosphate decarboxylase.